A 692-amino-acid chain; its full sequence is Protein arginine N-methyltransferase 7 (692 aa).

SAM-dependent MTase PRMT-type domains lie at 14-359 (ENSW…YSLW) and 368-692 (AKTV…QEKR).

This sequence belongs to the class I-like SAM-binding methyltransferase superfamily. Protein arginine N-methyltransferase family. PRMT7 subfamily.

Functionally, essential arginine methyltransferase that can both catalyze the formation of omega-N monomethylarginine (MMA) and symmetrical dimethylarginine (sDMA). Specifically mediates the symmetrical dimethylation of arginine residues in the small nuclear ribonucleoproteins SmD1 and SmD3. This Drosophila pseudoobscura pseudoobscura (Fruit fly) protein is Protein arginine N-methyltransferase 7 (Art7).